Consider the following 388-residue polypeptide: Succinate--CoA ligase [ADP-forming] subunit beta (388 aa).

One can recognise an ATP-grasp domain in the interval 9–245; that stretch reads KALLKEYGMP…KSQENERELK (237 aa). ATP contacts are provided by residues Lys46, 53-55, Glu100, Tyr103, and Glu108; that span reads GRG. Residues Asn200 and Asp214 each coordinate Mg(2+). Substrate is bound by residues Asn265 and 322–324; that span reads GIV.

Belongs to the succinate/malate CoA ligase beta subunit family. Heterotetramer of two alpha and two beta subunits. It depends on Mg(2+) as a cofactor.

It carries out the reaction succinate + ATP + CoA = succinyl-CoA + ADP + phosphate. It catalyses the reaction GTP + succinate + CoA = succinyl-CoA + GDP + phosphate. The protein operates within carbohydrate metabolism; tricarboxylic acid cycle; succinate from succinyl-CoA (ligase route): step 1/1. Its function is as follows. Succinyl-CoA synthetase functions in the citric acid cycle (TCA), coupling the hydrolysis of succinyl-CoA to the synthesis of either ATP or GTP and thus represents the only step of substrate-level phosphorylation in the TCA. The beta subunit provides nucleotide specificity of the enzyme and binds the substrate succinate, while the binding sites for coenzyme A and phosphate are found in the alpha subunit. This Acinetobacter baumannii (strain AB307-0294) protein is Succinate--CoA ligase [ADP-forming] subunit beta.